Here is a 167-residue protein sequence, read N- to C-terminus: MFSHVICKFLLTLSFITIIYAAKSESTINKPEKCGLKASSSSTVRIHYRSRVWGQEEYFESTYIREAPLEVKLGNGNLLKGIEDGIHGMCTGEIRRLLIPPNQAYGAIGIPNLVPPNTAIVVDVEMVNVNSPFSLWFWISGLILFSAFLLFGRKPIKGDTSNIKKKE.

An N-terminal signal peptide occupies residues 1 to 21 (MFSHVICKFLLTLSFITIIYA). Residues 41–130 (SSTVRIHYRS…VVDVEMVNVN (90 aa)) enclose the PPIase FKBP-type domain. The helical transmembrane segment at 132–152 (PFSLWFWISGLILFSAFLLFG) threads the bilayer.

The protein belongs to the FKBP-type PPIase family. FKBP2 subfamily.

Its subcellular location is the membrane. It carries out the reaction [protein]-peptidylproline (omega=180) = [protein]-peptidylproline (omega=0). Its activity is regulated as follows. Inhibited by both FK506 and rapamycin. In terms of biological role, PPIases accelerate the folding of proteins. It catalyzes the cis-trans isomerization of proline imidic peptide bonds in oligopeptides. The chain is FK506-binding protein 2A (FKBP2) from Rhizopus delemar (strain RA 99-880 / ATCC MYA-4621 / FGSC 9543 / NRRL 43880) (Mucormycosis agent).